The sequence spans 370 residues: Serine O-succinyltransferase (370 aa).

Residues A46 to D355 form the AB hydrolase-1 domain. The interval G52–P55 is important for substrate specificity. Residue S149 is the Nucleophile of the active site. Position 218 (R218) interacts with substrate. Active-site residues include D316 and H349. Residue D350 coordinates substrate.

Belongs to the AB hydrolase superfamily. MetX family. Homodimer.

The protein localises to the cytoplasm. It catalyses the reaction succinyl-CoA + L-serine = O-succinyl-L-serine + CoA. The enzyme catalyses L-homoserine + succinyl-CoA = O-succinyl-L-homoserine + CoA. It functions in the pathway amino-acid biosynthesis; L-cysteine biosynthesis; L-cysteine from L-serine: step 1/2. In terms of biological role, transfers a succinyl group from succinyl-CoA to L-serine, forming succinyl-L-serine. In vitro, also has homoserine succinyl transferase activity. The sequence is that of Serine O-succinyltransferase from Stenotrophomonas maltophilia (Pseudomonas maltophilia).